A 252-amino-acid chain; its full sequence is F-box/SPRY domain-containing protein 1 (252 aa).

Positions 1–48 constitute an F-box domain; that stretch reads MVDPLCNYNVLEAIFSYLELSDLSRCSQVCKSWYHFLNDENSDVWRWH. The region spanning 58 to 250 is the B30.2/SPRY domain; the sequence is IKSDLLASVT…VSMVYLGTPL (193 aa).

It belongs to the FBXO45/Fsn family. In terms of assembly, component of an E3 ubiquitin ligase complex composed of hiw and Fsn.

The protein localises to the synapse. The protein operates within protein modification; protein ubiquitination. Its function is as follows. Required in the presynaptic motoneuron to down-regulate the levels of wnd and restrain synaptic terminal growth at the neuromuscular junction (NMJ). This is F-box/SPRY domain-containing protein 1 from Drosophila mojavensis (Fruit fly).